The chain runs to 149 residues: Ribosome-binding factor A (149 aa).

The tract at residues 123-149 is disordered; sequence LAKLREGAAPAGDADPYKTSSKSESEE.

Belongs to the RbfA family. Monomer. Binds 30S ribosomal subunits, but not 50S ribosomal subunits or 70S ribosomes.

Its subcellular location is the cytoplasm. Its function is as follows. One of several proteins that assist in the late maturation steps of the functional core of the 30S ribosomal subunit. Associates with free 30S ribosomal subunits (but not with 30S subunits that are part of 70S ribosomes or polysomes). Required for efficient processing of 16S rRNA. May interact with the 5'-terminal helix region of 16S rRNA. This is Ribosome-binding factor A from Corynebacterium glutamicum (strain ATCC 13032 / DSM 20300 / JCM 1318 / BCRC 11384 / CCUG 27702 / LMG 3730 / NBRC 12168 / NCIMB 10025 / NRRL B-2784 / 534).